A 171-amino-acid chain; its full sequence is uncharacterized protein (171 aa).

Positions 1–24 are cleaved as a signal peptide; the sequence is MIFDSLTMTQSSLSLLLLTGAIFS. Topologically, residues 25–70 are extracellular; that stretch reads ISALYLTLFHRCATFSATSDLFLLVPLKFVSRDINDRLKTHYHHSC. A helical transmembrane segment spans residues 71 to 91; sequence LGSPFLCIIFLFISPLLNYHF. At 92-140 the chain is on the cytoplasmic side; it reads RSLVRPPKIHQKGSIPTLTKNAETRCSHHLKQAAATGEVCKVVVIIKGH. A helical membrane pass occupies residues 141 to 161; it reads ILKDCSIFFFIIFPLIYPLFI. At 162–171 the chain is on the extracellular side; that stretch reads NCSSKYNGLQ.

Its subcellular location is the membrane. This is an uncharacterized protein from Saccharomyces cerevisiae (strain ATCC 204508 / S288c) (Baker's yeast).